Reading from the N-terminus, the 229-residue chain is Synaptogyrin-3 (229 aa).

Met-1 is subject to N-acetylmethionine. The MARVEL domain occupies 20-172 (FARRPQTLLR…LTVKALQRFR (153 aa)). 4 consecutive transmembrane segments (helical) span residues 30–50 (VASW…GYVN), 70–90 (FGVA…LLDV), 105–125 (VLLD…GFCF), and 148–168 (AVIT…VKAL).

Belongs to the synaptogyrin family. As to quaternary structure, interacts (via N-terminus) with SLC6A3 (via N-terminus). May interact with VMAT2.

It is found in the cytoplasmic vesicle. The protein resides in the secretory vesicle. The protein localises to the synaptic vesicle membrane. It localises to the synapse. In terms of biological role, may play a role in regulated exocytosis. May indirectly regulate the activity of the plasma membrane dopamine transporter SLC6A3 and thereby regulate dopamine transport back from the synaptic cleft into the presynaptic terminal. This Bos taurus (Bovine) protein is Synaptogyrin-3.